A 473-amino-acid chain; its full sequence is MKTLYSLRRSYPVETLFNGTLALGGRDQATTGFAWWSGNARLINLSGKLLGAHVAHAGLIVFWAGAMNLFEVAHFVPEKPMYEQGLILLPHLATLGWGVGPGGEVVDTFPYFVSGVLHLISSAVLGFGGVYHALIGPETLEESFPFFGYVWKDKNKMTTILGIHLILLGAGAFLLVFKALYFGGLYDTWAPGGGDVRKITNITLNPGVIFGYLLKSPFGGEGWIVSVDNLEDIVGGHVWLGSICILGGIWHILTKPFAWARRAFVWSGEAYLSYSLAAISVMGFIACCFVWFNNTAYPSEFYGPTGPEASQAQAFTFLVRDQRLGANVGSAQGPTGLGKYLMRSPTGEIIFGGETMRFWDLRAPWLEPLRGPNGLDLGKLKKDIQPWQERRSAEYMTHAPLGSLNSVGGVATEINAVNYVSPRSWLSTSHFVLGFFFFVGHLWHAGRARAAAAGFEKGIDRDTEPVLFMNPLN.

A propeptide spanning residues 1–14 is cleaved from the precursor; it reads MKTLYSLRRSYPVE. The residue at position 15 (T15) is an N-acetylthreonine. Position 15 is a phosphothreonine (T15). Transmembrane regions (helical) follow at residues 69-93, 134-155, 178-200, 255-275, and 291-312; these read LFEV…PHLA, LIGP…KDKN, KALY…RKIT, KPFA…LSYS, and WFNN…ASQA. Residue E367 coordinates [CaMn4O5] cluster. A helical transmembrane segment spans residues 447-471; it reads RARAAAAGFEKGIDRDTEPVLFMNP.

The protein belongs to the PsbB/PsbC family. PsbC subfamily. PSII is composed of 1 copy each of membrane proteins PsbA, PsbB, PsbC, PsbD, PsbE, PsbF, PsbH, PsbI, PsbJ, PsbK, PsbL, PsbM, PsbT, PsbX, PsbY, PsbZ, Psb30/Ycf12, at least 3 peripheral proteins of the oxygen-evolving complex and a large number of cofactors. It forms dimeric complexes. Binds multiple chlorophylls and provides some of the ligands for the Ca-4Mn-5O cluster of the oxygen-evolving complex. It may also provide a ligand for a Cl- that is required for oxygen evolution. PSII binds additional chlorophylls, carotenoids and specific lipids. serves as cofactor.

Its subcellular location is the plastid. It is found in the chloroplast thylakoid membrane. In terms of biological role, one of the components of the core complex of photosystem II (PSII). It binds chlorophyll and helps catalyze the primary light-induced photochemical processes of PSII. PSII is a light-driven water:plastoquinone oxidoreductase, using light energy to abstract electrons from H(2)O, generating O(2) and a proton gradient subsequently used for ATP formation. The protein is Photosystem II CP43 reaction center protein of Zygnema circumcarinatum (Green alga).